Reading from the N-terminus, the 284-residue chain is Bifunctional protein FolD (284 aa).

NADP(+) contacts are provided by residues G166–S168 and I232.

It belongs to the tetrahydrofolate dehydrogenase/cyclohydrolase family. Homodimer.

It catalyses the reaction (6R)-5,10-methylene-5,6,7,8-tetrahydrofolate + NADP(+) = (6R)-5,10-methenyltetrahydrofolate + NADPH. The enzyme catalyses (6R)-5,10-methenyltetrahydrofolate + H2O = (6R)-10-formyltetrahydrofolate + H(+). Its pathway is one-carbon metabolism; tetrahydrofolate interconversion. Its function is as follows. Catalyzes the oxidation of 5,10-methylenetetrahydrofolate to 5,10-methenyltetrahydrofolate and then the hydrolysis of 5,10-methenyltetrahydrofolate to 10-formyltetrahydrofolate. In Alteromonas mediterranea (strain DSM 17117 / CIP 110805 / LMG 28347 / Deep ecotype), this protein is Bifunctional protein FolD.